The sequence spans 887 residues: 3-hydroxy-3-methylglutaryl-coenzyme A reductase (887 aa).

Residues 1–9 (MLSRLFRMH) are Cytoplasmic-facing. The helical transmembrane segment at 10-39 (GLFVASHPWEVIVGTVTLTICMMSMNMFTG) threads the bilayer. The Lumenal segment spans residues 40 to 56 (NNKICGWNYECPKFEED). Residues 57 to 78 (VLSSDIIILTITRCIAILYIYF) traverse the membrane as a helical segment. In terms of domain architecture, SSD spans 61–218 (DIIILTITRC…MTFFPACVSL (158 aa)). The INSIG-binding motif signature appears at 75–78 (YIYF). At 79-89 (QFQNLRQLGSK) the chain is on the cytoplasmic side. Lys-89 is covalently cross-linked (Glycyl lysine isopeptide (Lys-Gly) (interchain with G-Cter in ubiquitin)). The chain crosses the membrane as a helical span at residues 90–114 (YILGIAGLFTIFSSFVFSTVVIHFL). Over 115-123 (DKELTGLNE) the chain is Lumenal. The helical transmembrane segment at 124–149 (ALPFFLLLIDLSRASALAKFALSSNS) threads the bilayer. Over 150–159 (QDEVRENIAR) the chain is Cytoplasmic. Residues 160–187 (GMAILGPTFTLDALVECLVIGVGTMSGV) traverse the membrane as a helical segment. The Lumenal portion of the chain corresponds to 188–191 (RQLE). A helical transmembrane segment spans residues 192–220 (IMCCFGCMSVLANYFVFMTFFPACVSLVL). The Cytoplasmic portion of the chain corresponds to 221 to 248 (ELSRESREGRPIWQLSHFARVLEEEENK). Lys-248 participates in a covalent cross-link: Glycyl lysine isopeptide (Lys-Gly) (interchain with G-Cter in ubiquitin). The helical transmembrane segment at 249-275 (PNPVTQRVKMIMSLGLVLVHAHSRWIA) threads the bilayer. The Lumenal segment spans residues 276-314 (DPSPQNSTTEHSKVSLGLDEDVSKRIEPSVSLWQFYLSK). Residue Asn-281 is glycosylated (N-linked (GlcNAc...) asparagine). The chain crosses the membrane as a helical span at residues 315–339 (MISMDIEQVVTLSLAFLLAVKYIFF). Residues 340 to 887 (EQAETESTLS…LQGTCTKKSA (548 aa)) are Cytoplasmic-facing. Catalysis depends on charge relay system residues Glu-558, Lys-690, and Asp-766. Catalysis depends on His-865, which acts as the Proton donor. Phosphoserine; by AMPK is present on Ser-871.

Belongs to the HMG-CoA reductase family. Homotetramer. Homodimer. Interacts (via its SSD) with INSIG1; the interaction, accelerated by sterols, leads to the recruitment of HMGCR to AMFR/gp78 for its ubiquitination by the sterol-mediated ERAD pathway. Interacts with UBIAD1. N-glycosylated. Glycosylated with high mannose chains including Man(6)(GlcNAc)(2), Man(7)(GlcNAc)(2) and Man(8)(GlcNAc)(2). Deglycosylated by NGLY1 on release from the endoplasmic reticulum (ER) in a sterol-mediated manner. Post-translationally, undergoes sterol-mediated ubiquitination and ER-associated degradation (ERAD). Accumulation of sterols in the endoplasmic reticulum (ER) membrane, triggers binding of the reductase to the ER membrane protein INSIG1 or INSIG2. The INSIG1 binding leads to the recruitment of the ubiquitin ligase, AMFR/gp78, RNF139 or RNF145, initiating ubiquitination of the reductase. The ubiquitinated reductase is then extracted from the ER membrane and delivered to cytosolic 26S proteosomes by a mechanism probably mediated by the ATPase Valosin-containing protein VCP/p97. The INSIG2-binding leads to the recruitment of the ubiquitin ligase RNF139, initiating ubiquitination of the reductase. Lys-248 is the main site of ubiquitination. Ubiquitination is enhanced by the presence of a geranylgeranylated protein. In terms of processing, phosphorylated. Phosphorylation at Ser-871 reduces the catalytic activity.

The protein resides in the endoplasmic reticulum membrane. The protein localises to the peroxisome membrane. The catalysed reaction is (R)-mevalonate + 2 NADP(+) + CoA = (3S)-3-hydroxy-3-methylglutaryl-CoA + 2 NADPH + 2 H(+). It participates in metabolic intermediate biosynthesis; (R)-mevalonate biosynthesis; (R)-mevalonate from acetyl-CoA: step 3/3. With respect to regulation, regulated by a negative feedback mechanism through sterols and non-sterol metabolites derived from mevalonate. Phosphorylation at Ser-871 down-regulates the catalytic activity. Catalyzes the conversion of (3S)-hydroxy-3-methylglutaryl-CoA (HMG-CoA) to mevalonic acid, the rate-limiting step in the synthesis of cholesterol and other isoprenoids, thus plays a critical role in cellular cholesterol homeostasis. In Cricetulus griseus (Chinese hamster), this protein is 3-hydroxy-3-methylglutaryl-coenzyme A reductase (HMGCR).